A 393-amino-acid polypeptide reads, in one-letter code: Translation initiation factor eIF2B subunit beta (393 aa).

The interval 105–125 (VSSSNSSSPSQKRDIPSNEKL) is disordered. Ser106, Ser108, and Ser112 each carry phosphoserine.

It belongs to the eIF-2B alpha/beta/delta subunits family. As to quaternary structure, component of the translation initiation factor 2B (eIF2B) complex which is a heterodecamer of two sets of five different subunits: alpha, beta, gamma, delta and epsilon. Subunits alpha, beta and delta comprise a regulatory subcomplex and subunits epsilon and gamma comprise a catalytic subcomplex. Within the complex, the hexameric regulatory complex resides at the center, with the two heterodimeric catalytic subcomplexes bound on opposite sides.

It localises to the cytoplasm. Its subcellular location is the cytosol. Its function is as follows. Acts as a component of the translation initiation factor 2B (eIF2B) complex, which catalyzes the exchange of GDP for GTP on the eukaryotic initiation factor 2 (eIF2) complex gamma subunit. Its guanine nucleotide exchange factor activity is repressed when bound to eIF2 complex phosphorylated on the alpha subunit, thereby limiting the amount of methionyl-initiator methionine tRNA available to the ribosome and consequently global translation is repressed. The protein is Translation initiation factor eIF2B subunit beta (tif222) of Schizosaccharomyces pombe (strain 972 / ATCC 24843) (Fission yeast).